Here is a 66-residue protein sequence, read N- to C-terminus: Gallinacin-8 (66 aa).

Positions Met1–Leu19 are cleaved as a signal peptide. A propeptide spanning residues Gly20–Pro25 is cleaved from the precursor. Disulfide bonds link Cys31–Cys60, Cys38–Cys54, and Cys43–Cys61.

It belongs to the beta-defensin family. As to expression, expressed in the liver, kidney, gall bladder, testis, ovary and male and femae reproductive tracts. Expressed in the ovarian stroma and the theca and granulosa layers of the ovarian follicle.

The protein resides in the secreted. The protein localises to the cytoplasmic granule. Has bactericidal activity. The chain is Gallinacin-8 (GAL8) from Gallus gallus (Chicken).